Here is a 274-residue protein sequence, read N- to C-terminus: NH(3)-dependent NAD(+) synthetase (274 aa).

46–53 (GISGGQDS) contributes to the ATP binding site. Residue aspartate 52 participates in Mg(2+) binding. Deamido-NAD(+) is bound at residue arginine 140. Residue threonine 160 participates in ATP binding. Glutamate 165 contacts Mg(2+). The deamido-NAD(+) site is built by lysine 173 and aspartate 180. Lysine 189 and threonine 211 together coordinate ATP. 260–261 (HK) provides a ligand contact to deamido-NAD(+).

This sequence belongs to the NAD synthetase family. Homodimer.

It catalyses the reaction deamido-NAD(+) + NH4(+) + ATP = AMP + diphosphate + NAD(+) + H(+). It functions in the pathway cofactor biosynthesis; NAD(+) biosynthesis; NAD(+) from deamido-NAD(+) (ammonia route): step 1/1. Catalyzes the ATP-dependent amidation of deamido-NAD to form NAD. Uses ammonia as a nitrogen source. This chain is NH(3)-dependent NAD(+) synthetase, found in Streptococcus pyogenes serotype M1.